A 69-amino-acid polypeptide reads, in one-letter code: Putative membrane protein insertion efficiency factor (69 aa).

Belongs to the UPF0161 family.

The protein localises to the cell membrane. Could be involved in insertion of integral membrane proteins into the membrane. The chain is Putative membrane protein insertion efficiency factor from Alkaliphilus oremlandii (strain OhILAs) (Clostridium oremlandii (strain OhILAs)).